A 597-amino-acid polypeptide reads, in one-letter code: Replication protein E1 (597 aa).

The short motif at 75 to 77 (KRK) is the Nuclear localization signal element. Ser81, Ser91, and Ser104 each carry phosphoserine; by host. A Nuclear export signal motif is present at residues 90–99 (LSPQLASISL). The interval 119–141 (QSSNEADDSLEGQRQVEPLPGRE) is disordered. Residues 137-300 (LPGREENGAD…TLITHHLAAE (164 aa)) are DNA-binding region. An SF3 helicase domain is found at 400 to 550 (IEFILFLADF…FPLDDNGNPG (151 aa)). Residue 426-433 (GPPNTGKS) participates in ATP binding. A Glycyl lysine isopeptide (Lys-Gly) (interchain with G-Cter in SUMO) cross-link involves residue Lys507. The segment at 574-597 (PEDGEDGETQRGLRLTARGTTESV) is disordered.

The protein belongs to the papillomaviridae E1 protein family. In terms of assembly, can form hexamers. Interacts with E2 protein; this interaction increases E1 DNA binding specificity. Interacts with host DNA polymerase subunit POLA2. Interacts with host single stranded DNA-binding protein RPA1. Interacts with host TOP1; this interaction stimulates the enzymatic activity of TOP1. In terms of processing, phosphorylated. Post-translationally, sumoylated.

Its subcellular location is the host nucleus. It carries out the reaction Couples ATP hydrolysis with the unwinding of duplex DNA by translocating in the 3'-5' direction.. The catalysed reaction is ATP + H2O = ADP + phosphate + H(+). Its function is as follows. ATP-dependent DNA 3'-5' helicase required for initiation of viral DNA replication. It forms a complex with the viral E2 protein. The E1-E2 complex binds to the replication origin which contains binding sites for both proteins. During the initial step, a dimer of E1 interacts with a dimer of protein E2 leading to a complex that binds the viral origin of replication with high specificity. Then, a second dimer of E1 displaces the E2 dimer in an ATP-dependent manner to form the E1 tetramer. Following this, two E1 monomers are added to each half of the site, which results in the formation of two E1 trimers on the viral ori. Subsequently, two hexamers will be created. The double hexamer acts as a bi-directional helicase machinery and unwinds the viral DNA and then recruits the host DNA polymerase to start replication. The sequence is that of Replication protein E1 from Canis lupus familiaris (Dog).